Here is a 68-residue protein sequence, read N- to C-terminus: ATP synthase protein 8 (68 aa).

A helical transmembrane segment spans residues 8 to 24; the sequence is VWPTIIMSMLLALFLLM. N6-acetyllysine; alternate is present on Lys54. Lys54 is modified (N6-succinyllysine; alternate). Lys57 is subject to N6-acetyllysine.

Belongs to the ATPase protein 8 family. In terms of assembly, F-type ATPases have 2 components, CF(1) - the catalytic core - and CF(0) - the membrane proton channel. Component of an ATP synthase complex composed of ATP5PB, ATP5MC1, ATP5F1E, ATP5PD, ATP5ME, ATP5PF, ATP5MF, MT-ATP6, MT-ATP8, ATP5F1A, ATP5F1B, ATP5F1D, ATP5F1C, ATP5PO, ATP5MG, ATP5MK and ATP5MJ. Interacts with PRICKLE3.

Its subcellular location is the mitochondrion membrane. Its function is as follows. Mitochondrial membrane ATP synthase (F(1)F(0) ATP synthase or Complex V) produces ATP from ADP in the presence of a proton gradient across the membrane which is generated by electron transport complexes of the respiratory chain. F-type ATPases consist of two structural domains, F(1) - containing the extramembraneous catalytic core and F(0) - containing the membrane proton channel, linked together by a central stalk and a peripheral stalk. During catalysis, ATP synthesis in the catalytic domain of F(1) is coupled via a rotary mechanism of the central stalk subunits to proton translocation. Part of the complex F(0) domain. Minor subunit located with subunit a in the membrane. This Hylobates lar (Lar gibbon) protein is ATP synthase protein 8 (MT-ATP8).